The primary structure comprises 88 residues: Sec-independent protein translocase protein TatA (88 aa).

Residues 4-24 (LSIWHWLIVLAVVLVLFVGGG) traverse the membrane as a helical segment. The interval 45 to 88 (ADDETMEGSTGSGGHIAPPGPAAGTVQRDASFSGTGRPSGSSTP) is disordered. The span at 75-88 (SFSGTGRPSGSSTP) shows a compositional bias: low complexity.

Belongs to the TatA/E family. In terms of assembly, the Tat system comprises two distinct complexes: a TatABC complex, containing multiple copies of TatA, TatB and TatC subunits, and a separate TatA complex, containing only TatA subunits. Substrates initially bind to the TatABC complex, which probably triggers association of the separate TatA complex to form the active translocon.

It is found in the cell inner membrane. Functionally, part of the twin-arginine translocation (Tat) system that transports large folded proteins containing a characteristic twin-arginine motif in their signal peptide across membranes. TatA could form the protein-conducting channel of the Tat system. The sequence is that of Sec-independent protein translocase protein TatA from Gluconacetobacter diazotrophicus (strain ATCC 49037 / DSM 5601 / CCUG 37298 / CIP 103539 / LMG 7603 / PAl5).